A 180-amino-acid polypeptide reads, in one-letter code: Ribosome maturation factor RimM (180 aa).

A PRC barrel domain is found at 97-176 (EGEFFYCDLI…KITTNNAKTL (80 aa)).

It belongs to the RimM family. As to quaternary structure, binds ribosomal protein uS19.

It is found in the cytoplasm. Its function is as follows. An accessory protein needed during the final step in the assembly of 30S ribosomal subunit, possibly for assembly of the head region. Essential for efficient processing of 16S rRNA. May be needed both before and after RbfA during the maturation of 16S rRNA. It has affinity for free ribosomal 30S subunits but not for 70S ribosomes. This chain is Ribosome maturation factor RimM, found in Helicobacter acinonychis (strain Sheeba).